Consider the following 89-residue polypeptide: Putative regulatory protein CYB_0055 (89 aa).

This sequence belongs to the RemA family.

The protein is Putative regulatory protein CYB_0055 of Synechococcus sp. (strain JA-2-3B'a(2-13)) (Cyanobacteria bacterium Yellowstone B-Prime).